We begin with the raw amino-acid sequence, 442 residues long: 3-dehydroquinate synthase, chloroplastic (442 aa).

The N-terminal 61 residues, 1-61, are a transit peptide targeting the chloroplast; the sequence is MASSFCPKQA…TTRLKVLATS (61 aa). NAD(+) contacts are provided by residues N119, 150–152, K155, 183–188, 208–209, K221, K230, and 248–251; these read DGE, GGVIGD, TT, and TLNT. Position 263 (E263) interacts with a divalent metal cation. K305 contributes to the NAD(+) binding site. Residues H326 and H343 each contribute to the a divalent metal cation site.

Belongs to the sugar phosphate cyclases superfamily. Dehydroquinate synthase family. As to quaternary structure, homodimer. A divalent metal cation is required as a cofactor. The cofactor is NAD(+). Highly expressed in roots. Lower expression in stems, flowers and cotyledons. Barely detected in leaves.

It localises to the plastid. The protein localises to the chloroplast. It carries out the reaction 7-phospho-2-dehydro-3-deoxy-D-arabino-heptonate = 3-dehydroquinate + phosphate. Its pathway is metabolic intermediate biosynthesis; chorismate biosynthesis; chorismate from D-erythrose 4-phosphate and phosphoenolpyruvate: step 2/7. In terms of biological role, catalyzes the second step in the shikimate pathway. This Solanum lycopersicum (Tomato) protein is 3-dehydroquinate synthase, chloroplastic (DHQS).